The sequence spans 522 residues: Thiamine biosynthetic bifunctional enzyme TH1, chloroplastic (522 aa).

Residues methionine 1 to valine 36 constitute a chloroplast transit peptide. 4-amino-2-methyl-5-(diphosphooxymethyl)pyrimidine is bound by residues glutamine 345 to lysine 349 and asparagine 377. Positions 378 and 397 each coordinate Mg(2+). 4-amino-2-methyl-5-(diphosphooxymethyl)pyrimidine is bound at residue serine 416. Threonine 442–threonine 444 serves as a coordination point for 2-[(2R,5Z)-2-carboxy-4-methylthiazol-5(2H)-ylidene]ethyl phosphate. A 4-amino-2-methyl-5-(diphosphooxymethyl)pyrimidine-binding site is contributed by lysine 445. Residues glycine 472 and valine 495 to serine 496 each bind 2-[(2R,5Z)-2-carboxy-4-methylthiazol-5(2H)-ylidene]ethyl phosphate.

The protein belongs to the thiamine-phosphate synthase family. The cofactor is Mg(2+).

It localises to the plastid. It is found in the chloroplast. The enzyme catalyses 2-[(2R,5Z)-2-carboxy-4-methylthiazol-5(2H)-ylidene]ethyl phosphate + 4-amino-2-methyl-5-(diphosphooxymethyl)pyrimidine + 2 H(+) = thiamine phosphate + CO2 + diphosphate. It carries out the reaction 2-(2-carboxy-4-methylthiazol-5-yl)ethyl phosphate + 4-amino-2-methyl-5-(diphosphooxymethyl)pyrimidine + 2 H(+) = thiamine phosphate + CO2 + diphosphate. It catalyses the reaction 4-methyl-5-(2-phosphooxyethyl)-thiazole + 4-amino-2-methyl-5-(diphosphooxymethyl)pyrimidine + H(+) = thiamine phosphate + diphosphate. The catalysed reaction is 4-amino-5-hydroxymethyl-2-methylpyrimidine + ATP = 4-amino-2-methyl-5-(phosphooxymethyl)pyrimidine + ADP + H(+). It functions in the pathway cofactor biosynthesis; thiamine diphosphate biosynthesis; thiamine phosphate from 4-amino-2-methyl-5-diphosphomethylpyrimidine and 4-methyl-5-(2-phosphoethyl)-thiazole: step 1/1. Its pathway is cofactor biosynthesis; thiamine diphosphate biosynthesis; 4-amino-2-methyl-5-diphosphomethylpyrimidine from 5-amino-1-(5-phospho-D-ribosyl)imidazole: step 2/3. Essential for thiamine biosynthesis. Bifunctional enzyme that catalyzes the phosphorylation of hydroxymethylpyrimidine phosphate (HMP-P) to HMP-PP and condenses 4-methyl-5-(beta-hydroxyethyl)thiazole monophosphate (THZ-P) and 2-methyl-4-amino-5-hydroxymethyl pyrimidine pyrophosphate (HMP-PP) to form thiamine monophosphate (TMP). The polypeptide is Thiamine biosynthetic bifunctional enzyme TH1, chloroplastic (TH1) (Arabidopsis thaliana (Mouse-ear cress)).